We begin with the raw amino-acid sequence, 462 residues long: Cytochrome P450 20A1 (462 aa).

A helical transmembrane segment spans residues 4–24 (FAIFAVTFLLALVGAVLYLYP). A heme-binding site is contributed by C409.

Belongs to the cytochrome P450 family. Heme is required as a cofactor.

The protein localises to the membrane. The polypeptide is Cytochrome P450 20A1 (Cyp20a1) (Mus musculus (Mouse)).